Consider the following 231-residue polypeptide: Monothiol glutaredoxin-6 (231 aa).

A signal peptide spans 1–29 (MIPSNKRNARILSITTLLLLLVFFVAQNA). Positions 116-219 (QKEYSLILDL…ESLQVWSDGK (104 aa)) constitute a Glutaredoxin domain. Cys136 is a [2Fe-2S] cluster binding site.

It belongs to the glutaredoxin family. Monothiol subfamily.

The protein resides in the vacuole. This Saccharomyces cerevisiae (strain ATCC 204508 / S288c) (Baker's yeast) protein is Monothiol glutaredoxin-6 (GRX6).